The sequence spans 348 residues: Aspartate carbamoyltransferase catalytic subunit (348 aa).

Positions 57 and 58 each coordinate carbamoyl phosphate. K86 is an L-aspartate binding site. Carbamoyl phosphate is bound by residues R107, H135, and Q138. L-aspartate is bound by residues R172 and R234. Carbamoyl phosphate contacts are provided by L274 and P275.

This sequence belongs to the aspartate/ornithine carbamoyltransferase superfamily. ATCase family. Heterododecamer (2C3:3R2) of six catalytic PyrB chains organized as two trimers (C3), and six regulatory PyrI chains organized as three dimers (R2).

It catalyses the reaction carbamoyl phosphate + L-aspartate = N-carbamoyl-L-aspartate + phosphate + H(+). Its pathway is pyrimidine metabolism; UMP biosynthesis via de novo pathway; (S)-dihydroorotate from bicarbonate: step 2/3. Catalyzes the condensation of carbamoyl phosphate and aspartate to form carbamoyl aspartate and inorganic phosphate, the committed step in the de novo pyrimidine nucleotide biosynthesis pathway. The protein is Aspartate carbamoyltransferase catalytic subunit of Dichelobacter nodosus (strain VCS1703A).